The following is a 204-amino-acid chain: MTTSRHGPLRVGIGGPVGSGKTALMEGLCKALRARYDLCAITNDIYTKEDARLLTVAGALPEERIMGVETGGCPHTAIREDASINLAAVAEMRRRFPALDLILIESGGDNLAATFSPELADLTLYVIDVAGGEKIPRKGGPGITRSDLLVINKTDLAPLVGADLAVMEADTRRMRGSRPYVFTSLRQGEGVEEVARFVVEAGGL.

15–22 (GPVGSGKT) is a GTP binding site.

Belongs to the SIMIBI class G3E GTPase family. UreG subfamily. As to quaternary structure, homodimer. UreD, UreF and UreG form a complex that acts as a GTP-hydrolysis-dependent molecular chaperone, activating the urease apoprotein by helping to assemble the nickel containing metallocenter of UreC. The UreE protein probably delivers the nickel.

It is found in the cytoplasm. In terms of biological role, facilitates the functional incorporation of the urease nickel metallocenter. This process requires GTP hydrolysis, probably effectuated by UreG. In Methylobacterium nodulans (strain LMG 21967 / CNCM I-2342 / ORS 2060), this protein is Urease accessory protein UreG.